The sequence spans 125 residues: Large ribosomal subunit protein bL19 (125 aa).

Belongs to the bacterial ribosomal protein bL19 family.

Functionally, this protein is located at the 30S-50S ribosomal subunit interface and may play a role in the structure and function of the aminoacyl-tRNA binding site. The protein is Large ribosomal subunit protein bL19 of Synechococcus sp. (strain JA-2-3B'a(2-13)) (Cyanobacteria bacterium Yellowstone B-Prime).